We begin with the raw amino-acid sequence, 162 residues long: Crossover junction endodeoxyribonuclease RuvC (162 aa).

Residues D7, E67, and D140 contribute to the active site. Mg(2+)-binding residues include D7, E67, and D140.

The protein belongs to the RuvC family. In terms of assembly, homodimer which binds Holliday junction (HJ) DNA. The HJ becomes 2-fold symmetrical on binding to RuvC with unstacked arms; it has a different conformation from HJ DNA in complex with RuvA. In the full resolvosome a probable DNA-RuvA(4)-RuvB(12)-RuvC(2) complex forms which resolves the HJ. It depends on Mg(2+) as a cofactor.

Its subcellular location is the cytoplasm. It carries out the reaction Endonucleolytic cleavage at a junction such as a reciprocal single-stranded crossover between two homologous DNA duplexes (Holliday junction).. Functionally, the RuvA-RuvB-RuvC complex processes Holliday junction (HJ) DNA during genetic recombination and DNA repair. Endonuclease that resolves HJ intermediates. Cleaves cruciform DNA by making single-stranded nicks across the HJ at symmetrical positions within the homologous arms, yielding a 5'-phosphate and a 3'-hydroxyl group; requires a central core of homology in the junction. The consensus cleavage sequence is 5'-(A/T)TT(C/G)-3'. Cleavage occurs on the 3'-side of the TT dinucleotide at the point of strand exchange. HJ branch migration catalyzed by RuvA-RuvB allows RuvC to scan DNA until it finds its consensus sequence, where it cleaves and resolves the cruciform DNA. This Pseudothermotoga lettingae (strain ATCC BAA-301 / DSM 14385 / NBRC 107922 / TMO) (Thermotoga lettingae) protein is Crossover junction endodeoxyribonuclease RuvC.